A 211-amino-acid polypeptide reads, in one-letter code: Ribonuclease HII (211 aa).

Positions 17–211 constitute an RNase H type-2 domain; it reads FLSAGVDEVG…CQPSLFEVRS (195 aa). Residues aspartate 23, glutamate 24, and aspartate 119 each coordinate a divalent metal cation.

It belongs to the RNase HII family. Mn(2+) serves as cofactor. Mg(2+) is required as a cofactor.

The protein resides in the cytoplasm. The catalysed reaction is Endonucleolytic cleavage to 5'-phosphomonoester.. In terms of biological role, endonuclease that specifically degrades the RNA of RNA-DNA hybrids. The sequence is that of Ribonuclease HII from Trichodesmium erythraeum (strain IMS101).